The sequence spans 183 residues: Threonylcarbamoyl-AMP synthase (183 aa).

One can recognise a YrdC-like domain in the interval Met-1–Gly-183.

Belongs to the SUA5 family. TsaC subfamily.

The protein resides in the cytoplasm. The catalysed reaction is L-threonine + hydrogencarbonate + ATP = L-threonylcarbamoyladenylate + diphosphate + H2O. Functionally, required for the formation of a threonylcarbamoyl group on adenosine at position 37 (t(6)A37) in tRNAs that read codons beginning with adenine. Catalyzes the conversion of L-threonine, HCO(3)(-)/CO(2) and ATP to give threonylcarbamoyl-AMP (TC-AMP) as the acyladenylate intermediate, with the release of diphosphate. In Mannheimia succiniciproducens (strain KCTC 0769BP / MBEL55E), this protein is Threonylcarbamoyl-AMP synthase.